We begin with the raw amino-acid sequence, 163 residues long: UPF0260 protein GOX1406 (163 aa).

Belongs to the UPF0260 family.

This chain is UPF0260 protein GOX1406, found in Gluconobacter oxydans (strain 621H) (Gluconobacter suboxydans).